The chain runs to 704 residues: MAVATTAVEGVPSRGAPGEVIHLNVGGKRFSTSRQTLTWIPDSFFSSLLSGRISTLKDETGAIFIDRDPTVFAPILNFLRTKELDPRGVHGSSLLHEAQFYGLTPLVRRLQVREELDRSSCGNVLFNGYLPPPVFPVKRRNRHSLVGPQQIGGRPAPVRRSNTMPPNLGNAGLLGRMLDERAPPSPSGQPEEPGMVRLVCGHHNWIAVAYTHFLVCYRLKEASGWQLAFSSPRLDWPIERLALAARVLGGAPGEHDKMVAAATGSEILLWALQAQGGGSEIGVFHLGVPVEALFFVGNQLIATSHTGRIGVWNAVTKHWQVQEVQPITSYDAAGSFLLLGCSNGSIYYVDVQKFPLRMKDNDLLVSELYRDPAEDGVTALSVYLTPKTSDSGNWIEIAYGTSSGVVRVIVQHPETVGSGPQLFQTFSVHRSPVTKIMLSEKHLISVCADNNHVRTWSVTRFRGMISTQPGSTPLASFKILALESVDGLGGCSAGNDIGPYGERDDQQVFIQKVVPNASQLFVRLSSTGQRVCSVRSVDGSPTTAFTVLECEGSRRLGSRPRRYLLTGQANGSLAMWDLTTAMDGLGQTPAGGLTEEELMDQLEQCELSPLASSRGSFPSPSPRTSLTSLHSASSNTSLYGPRGSPSPPQAEARRRGAGSFVDRCQELARGAPELRWPPTPAPRPSTSLGNPLTALKKTLNETSF.

A2 is modified (N-acetylalanine). Positions 19 to 88 (EVIHLNVGGK…LRTKELDPRG (70 aa)) constitute a BTB domain. The tract at residues 146-165 (VGPQQIGGRPAPVRRSNTMP) is disordered. At T163 the chain carries Phosphothreonine. 5 WD repeats span residues 233-280 (RLDW…GGSE), 283-322 (VFHLGVPVEALFFVGNQLIATSHTGRIGVWNAVTKHWQVQ), 324-359 (VQPITSYDAAGSFLLLGCSNGSIYYVDVQKFPLRMK), 428-466 (VHRSPVTKIMLSEKHLISVCADNNHVRTWSVTRFRGMIS), and 548-586 (LECEGSRRLGSRPRRYLLTGQANGSLAMWDLTTAMDGLG). Residues 609-704 (PLASSRGSFP…LKKTLNETSF (96 aa)) form a disordered region. The span at 612-631 (SSRGSFPSPSPRTSLTSLHS) shows a compositional bias: low complexity. Residues 618-623 (PSPSPR) carry the PXXXPR motif. A phosphoserine mark is found at S644 and S646. Residues 678–683 (PTPAPR) carry the PXXXPR motif. T693 is subject to Phosphothreonine.

It belongs to the KCTD3 family. Monomer. Interacts with CUL3; interaction is direct and forms a 5:5 heterodecamer. Interacts (via PXXXPR motifs) with SH3KBP1 (via SH3 domains). Directly interacts with cathepsin B/CTSB.

It is found in the lysosome. In terms of biological role, inhibits CBL-SH3KBP1 complex mediated down-regulation of EGFR signaling by sequestration of SH3KBP1. Binds to SH3KBP1 and prevents its interaction with CBL and inhibits translocation of SH3KBP1 to EGFR containing vesicles upon EGF stimulation. This Mus musculus (Mouse) protein is SH3KBP1-binding protein 1 (Shkbp1).